The sequence spans 126 residues: Large ribosomal subunit protein bL19 (126 aa).

Belongs to the bacterial ribosomal protein bL19 family.

Functionally, this protein is located at the 30S-50S ribosomal subunit interface and may play a role in the structure and function of the aminoacyl-tRNA binding site. The protein is Large ribosomal subunit protein bL19 of Gluconacetobacter diazotrophicus (strain ATCC 49037 / DSM 5601 / CCUG 37298 / CIP 103539 / LMG 7603 / PAl5).